Here is a 113-residue protein sequence, read N- to C-terminus: Ribulose bisphosphate carboxylase small subunit (113 aa).

This sequence belongs to the RuBisCO small chain family. Heterohexadecamer of 8 large and 8 small subunits. RuBisCO interacts with the C-terminus of CcmM, and can be found in complexes that also include carbonic anhydrase (ccaA).

The protein resides in the carboxysome. Functionally, ruBisCO catalyzes two reactions: the carboxylation of D-ribulose 1,5-bisphosphate, the primary event in carbon dioxide fixation, as well as the oxidative fragmentation of the pentose substrate in the photorespiration process. Both reactions occur simultaneously and in competition at the same active site. Although the small subunit is not catalytic it is essential for maximal activity. This Synechocystis sp. (strain ATCC 27184 / PCC 6803 / Kazusa) protein is Ribulose bisphosphate carboxylase small subunit.